The following is a 720-amino-acid chain: Calcium/calmodulin-dependent protein kinase type II (720 aa).

A Protein kinase domain is found at 12–269 (YDVKEELGKG…ADQALKVPWI (258 aa)). Residues 18 to 26 (LGKGAFSVV) and lysine 41 each bind ATP. Residue aspartate 134 is the Proton acceptor of the active site. The residue at position 284 (threonine 284) is a Phosphothreonine; by autocatalysis. 2 disordered regions span residues 317–345 (SDSTGSVASNGSTTHDASQVAGTSSQPTS) and 504–586 (DNLS…NLSA). Polar residues-rich tracts occupy residues 504–514 (DNLSASTSSDL) and 526–540 (PPSTIKESSESSQTI). Residues 569–586 (SSSNSSTASKSSSTNLSA) show a composition bias toward low complexity.

It belongs to the protein kinase superfamily. CAMK Ser/Thr protein kinase family. CaMK subfamily. Dodecamer. Subunits are tightly packed around a central ring-shaped scaffold with extensive contacts between the regulatory segment of one kinase and the catalytic domain of another enabling cooperative activation of a subunit by the adjacent molecule. Interacts with and phosphorylates daf-16; the interaction promotes daf-16 nuclear localization. Interacts with egl-2 and tir-1. Interacts with nsy-1. Mg(2+) is required as a cofactor. As to expression, expressed in the nervous system. Observed in the ADF and AWC neurons. Position in AWC neurons is regulated by microtubules. Localized to clusters in ventral cord neurites which appear to be required for glr-1 trafficking. Also present in oocytes.

The protein localises to the cytoplasm. It localises to the cell projection. Its subcellular location is the axon. The protein resides in the perikaryon. It carries out the reaction L-seryl-[protein] + ATP = O-phospho-L-seryl-[protein] + ADP + H(+). It catalyses the reaction L-threonyl-[protein] + ATP = O-phospho-L-threonyl-[protein] + ADP + H(+). Its activity is regulated as follows. Ca2(+)/calmodulin binding removes an autoinhibitory regulatory segment located C-terminal to the kinase domain. This releases the catalytic activity of the enzyme and makes accessible a regulatory residue Thr-284. Phosphorylation of Thr-284 by another kinase domain within the oligomeric holoenzyme keeps CaMKII active in the absence of Ca(2+)/calmodulin by preventing the rebinding of the regulatory segment to the kinase domain and by increasing the affinity of calmodulin for the enzyme. Can respond to high-frequency Ca(2+) pulses to become Ca(2+) independent. Acts in the signaling of a variety of pathways and processes. Phosphorylates 'Ser-319' of daf-16 in response to stress signals, such as heat, starvation and oxidation, which plays a role in prolonging lifespan. Required for viability under chronic osmotic stress in which it acts downstream of osr-1. Has roles in locomotion, oocyte maturation, brood size, egg laying, defecation, meiotic maturation and neuronal cell fate specification. Required for the regulation of synaptic density and neuromuscular junction morphology. Regulates the synaptic trafficking of glr-1. Bidirectional modulator of neurotransmitter release with negative modulatory effects mainly mediated via slo-1 activation. Involved in activation of ADF neurons and increased tph-1 transcription following exposure to pathogenic bacteria which leads to learned olfactory aversion to the bacteria. Implicated in the muscle regulation of spicule protraction. In conjunction with egl-2 has a role in the suppression of mating behavior under food deprivation to encourage foraging. Involved in restricting str-2 expression to only one of the two AWC neurons. May suppress the functional response to an internal pacemaker, perhaps by modulating the activity of the IP3 receptor. This Caenorhabditis elegans protein is Calcium/calmodulin-dependent protein kinase type II (unc-43).